Here is a 249-residue protein sequence, read N- to C-terminus: 3-deoxy-manno-octulosonate cytidylyltransferase (249 aa).

Belongs to the KdsB family.

Its subcellular location is the cytoplasm. The enzyme catalyses 3-deoxy-alpha-D-manno-oct-2-ulosonate + CTP = CMP-3-deoxy-beta-D-manno-octulosonate + diphosphate. It functions in the pathway nucleotide-sugar biosynthesis; CMP-3-deoxy-D-manno-octulosonate biosynthesis; CMP-3-deoxy-D-manno-octulosonate from 3-deoxy-D-manno-octulosonate and CTP: step 1/1. Its pathway is bacterial outer membrane biogenesis; lipopolysaccharide biosynthesis. Functionally, activates KDO (a required 8-carbon sugar) for incorporation into bacterial lipopolysaccharide in Gram-negative bacteria. The polypeptide is 3-deoxy-manno-octulosonate cytidylyltransferase (Aliivibrio salmonicida (strain LFI1238) (Vibrio salmonicida (strain LFI1238))).